We begin with the raw amino-acid sequence, 168 residues long: Large ribosomal subunit protein uL10 (168 aa).

Belongs to the universal ribosomal protein uL10 family. As to quaternary structure, part of the ribosomal stalk of the 50S ribosomal subunit. The N-terminus interacts with L11 and the large rRNA to form the base of the stalk. The C-terminus forms an elongated spine to which L12 dimers bind in a sequential fashion forming a multimeric L10(L12)X complex.

Its function is as follows. Forms part of the ribosomal stalk, playing a central role in the interaction of the ribosome with GTP-bound translation factors. This is Large ribosomal subunit protein uL10 from Lacticaseibacillus casei (strain BL23) (Lactobacillus casei).